The chain runs to 366 residues: Probable glucuronokinase 2 (366 aa).

Position 126 to 136 (126 to 136) interacts with ATP; the sequence is PRQTGLSGSSA. The Proton acceptor role is filled by aspartate 179.

Belongs to the GHMP kinase family. Mg(2+) serves as cofactor. Mn(2+) is required as a cofactor. It depends on Co(2+) as a cofactor.

The enzyme catalyses D-glucuronate + ATP = 1-phospho-alpha-D-glucuronate + ADP + H(+). Its function is as follows. Sugar-1-kinase with a strict substrate specificity for D-glucuronic acid and ATP. Involved in the biosynthesis of UDP-glucuronic acid (UDP-GlcA), providing nucleotide sugars for cell-wall polymers. May be also involved in a salvage pathway for glucuronic acid. The protein is Probable glucuronokinase 2 (GLCAK2) of Arabidopsis thaliana (Mouse-ear cress).